Here is a 91-residue protein sequence, read N- to C-terminus: MQRNLVVLLFLGMVALSSCGLREKHFQKLVKYAVPEGTLRTIIQTAVHKLGKTQFGCPAYQGYCDDHCQDIKKQEGFCHGFKCKCGIPMGF.

The first 19 residues, 1–19 (MQRNLVVLLFLGMVALSSC), serve as a signal peptide directing secretion. The propeptide occupies 20 to 27 (GLREKHFQ). A BetaSPN-type CS-alpha/beta domain is found at 54 to 91 (QFGCPAYQGYCDDHCQDIKKQEGFCHGFKCKCGIPMGF). 3 disulfides stabilise this stretch: C57-C78, C64-C83, and C68-C85.

Belongs to the long chain scorpion toxin family. Class 1 subfamily. In terms of tissue distribution, expressed by the venom gland.

The protein localises to the secreted. Its function is as follows. Inhibits voltage-gated potassium channel. The protein is Potassium channel toxin Meg-beta-KTx1 of Mesobuthus gibbosus (Mediterranean checkered scorpion).